The sequence spans 118 residues: MRSAKLKFEKRRSRIRHKISKTSNRVRLSIFKSGRHIYAQIIDDSKSITIAAASTLDEKIKKLKKSHCNIENAIKVGEEIAKKADSAGIKDVVFDRGGYKYHGVVKALADAAREKIKF.

Belongs to the universal ribosomal protein uL18 family. In terms of assembly, part of the 50S ribosomal subunit; part of the 5S rRNA/L5/L18/L25 subcomplex. Contacts the 5S and 23S rRNAs.

This is one of the proteins that bind and probably mediate the attachment of the 5S RNA into the large ribosomal subunit, where it forms part of the central protuberance. This Rickettsia conorii (strain ATCC VR-613 / Malish 7) protein is Large ribosomal subunit protein uL18.